We begin with the raw amino-acid sequence, 149 residues long: Glutamate mutase sigma subunit (149 aa).

Residues 3 to 140 (KATLVIGVIG…AHDINQRHDV (138 aa)) enclose the B12-binding domain. Adenosylcob(III)alamin is bound by residues 13 to 17 (ADCHA), H16, 61 to 63 (SSI), and 93 to 97 (NLVVG).

The protein belongs to the methylaspartate mutase GlmS subunit family. In terms of assembly, heterotetramer composed of 2 epsilon subunits (GlmE) and 2 sigma subunits (GlmS). GlmE exists as a homodimer and GlmS as a monomer. The cofactor is adenosylcob(III)alamin.

The enzyme catalyses (2S,3S)-3-methyl-L-aspartate = L-glutamate. It participates in amino-acid degradation; L-glutamate degradation via mesaconate pathway; acetate and pyruvate from L-glutamate: step 1/4. Its function is as follows. Catalyzes the carbon skeleton rearrangement of L-glutamate to L-threo-3-methylaspartate ((2S,3S)-3-methylaspartate). The chain is Glutamate mutase sigma subunit from Escherichia coli O157:H7.